Reading from the N-terminus, the 406-residue chain is CCA-adding enzyme (406 aa).

ATP is bound by residues Gly-32 and Arg-35. Positions 32 and 35 each coordinate CTP. Residues Asp-45 and Asp-47 each coordinate Mg(2+). Arg-116, Asp-159, Arg-162, Arg-165, and Arg-168 together coordinate ATP. Positions 116, 159, 162, 165, and 168 each coordinate CTP.

Belongs to the tRNA nucleotidyltransferase/poly(A) polymerase family. Bacterial CCA-adding enzyme type 3 subfamily. Homodimer. Mg(2+) is required as a cofactor.

The catalysed reaction is a tRNA precursor + 2 CTP + ATP = a tRNA with a 3' CCA end + 3 diphosphate. The enzyme catalyses a tRNA with a 3' CCA end + 2 CTP + ATP = a tRNA with a 3' CCACCA end + 3 diphosphate. Catalyzes the addition and repair of the essential 3'-terminal CCA sequence in tRNAs without using a nucleic acid template. Adds these three nucleotides in the order of C, C, and A to the tRNA nucleotide-73, using CTP and ATP as substrates and producing inorganic pyrophosphate. tRNA 3'-terminal CCA addition is required both for tRNA processing and repair. Also involved in tRNA surveillance by mediating tandem CCA addition to generate a CCACCA at the 3' terminus of unstable tRNAs. While stable tRNAs receive only 3'-terminal CCA, unstable tRNAs are marked with CCACCA and rapidly degraded. The polypeptide is CCA-adding enzyme (Enterococcus faecalis (strain ATCC 700802 / V583)).